The sequence spans 1235 residues: ATP-dependent helicase/nuclease subunit A (1235 aa).

In terms of domain architecture, UvrD-like helicase ATP-binding spans 12 to 482 (SLWTDDQWKA…IDLSQNFRSR (471 aa)). 33–40 (AAAGSGKT) contributes to the ATP binding site. The region spanning 509–800 (AAELTLGAKS…RMMTIHASKG (292 aa)) is the UvrD-like helicase C-terminal domain.

Belongs to the helicase family. AddA subfamily. As to quaternary structure, heterodimer of AddA and AddB/RexB. Mg(2+) is required as a cofactor.

The enzyme catalyses Couples ATP hydrolysis with the unwinding of duplex DNA by translocating in the 3'-5' direction.. The catalysed reaction is ATP + H2O = ADP + phosphate + H(+). Functionally, the heterodimer acts as both an ATP-dependent DNA helicase and an ATP-dependent, dual-direction single-stranded exonuclease. Recognizes the chi site generating a DNA molecule suitable for the initiation of homologous recombination. The AddA nuclease domain is required for chi fragment generation; this subunit has the helicase and 3' -&gt; 5' nuclease activities. The sequence is that of ATP-dependent helicase/nuclease subunit A from Listeria monocytogenes serotype 4a (strain HCC23).